We begin with the raw amino-acid sequence, 239 residues long: Ribonuclease PH (239 aa).

Phosphate is bound by residues Arg-88 and 126–128 (GTR).

The protein belongs to the RNase PH family. Homohexameric ring arranged as a trimer of dimers.

The catalysed reaction is tRNA(n+1) + phosphate = tRNA(n) + a ribonucleoside 5'-diphosphate. Phosphorolytic 3'-5' exoribonuclease that plays an important role in tRNA 3'-end maturation. Removes nucleotide residues following the 3'-CCA terminus of tRNAs; can also add nucleotides to the ends of RNA molecules by using nucleoside diphosphates as substrates, but this may not be physiologically important. Probably plays a role in initiation of 16S rRNA degradation (leading to ribosome degradation) during starvation. This is Ribonuclease PH from Coxiella burnetii (strain Dugway 5J108-111).